The chain runs to 687 residues: Homoaconitase, mitochondrial (687 aa).

The transit peptide at 1–18 directs the protein to the mitochondrion; that stretch reads MFAFRNRAVTQTLLVRRY. [4Fe-4S] cluster is bound by residues cysteine 340, cysteine 400, and cysteine 403. The span at 481 to 490 shows a compositional bias: acidic residues; that stretch reads EAEADAEAAE. The disordered stretch occupies residues 481-500; the sequence is EAEADAEAAESDPAPSGGVL.

It belongs to the aconitase/IPM isomerase family. Requires [4Fe-4S] cluster as cofactor.

The protein localises to the mitochondrion. The enzyme catalyses (2R,3S)-homoisocitrate = cis-homoaconitate + H2O. It functions in the pathway amino-acid biosynthesis; L-lysine biosynthesis via AAA pathway; L-alpha-aminoadipate from 2-oxoglutarate: step 3/5. Catalyzes the reversible hydration of cis-homoaconitate to (2R,3S)-homoisocitrate, a step in the alpha-aminoadipate pathway for lysine biosynthesis. This Yarrowia lipolytica (strain CLIB 122 / E 150) (Yeast) protein is Homoaconitase, mitochondrial (LYS4).